A 307-amino-acid polypeptide reads, in one-letter code: Coproporphyrin III ferrochelatase (307 aa).

Fe-coproporphyrin III-binding positions include tyrosine 12, arginine 29, 45 to 46 (RY), serine 53, and tyrosine 124. Fe(2+) is bound by residues histidine 181 and glutamate 263.

The protein belongs to the ferrochelatase family.

It localises to the cytoplasm. It carries out the reaction Fe-coproporphyrin III + 2 H(+) = coproporphyrin III + Fe(2+). The protein operates within porphyrin-containing compound metabolism; protoheme biosynthesis. Functionally, involved in coproporphyrin-dependent heme b biosynthesis. Catalyzes the insertion of ferrous iron into coproporphyrin III to form Fe-coproporphyrin III. This is Coproporphyrin III ferrochelatase from Staphylococcus saprophyticus subsp. saprophyticus (strain ATCC 15305 / DSM 20229 / NCIMB 8711 / NCTC 7292 / S-41).